Here is a 142-residue protein sequence, read N- to C-terminus: Large ribosomal subunit protein uL13 (142 aa).

The protein belongs to the universal ribosomal protein uL13 family. Part of the 50S ribosomal subunit.

Functionally, this protein is one of the early assembly proteins of the 50S ribosomal subunit, although it is not seen to bind rRNA by itself. It is important during the early stages of 50S assembly. The polypeptide is Large ribosomal subunit protein uL13 (Alkalilimnicola ehrlichii (strain ATCC BAA-1101 / DSM 17681 / MLHE-1)).